A 114-amino-acid polypeptide reads, in one-letter code: MNGTFFNHTVFTHGVLLNRSQELAGTLVDCCTGNGSEVTANDGGGSLVLAQDERKLFVTRVVQIAVLCVLSLTVMFGIFFLGCNLMIKSESMINFLVKDRRSSKDVEAVMIGLS.

A helical transmembrane segment spans residues 61 to 81; sequence VVQIAVLCVLSLTVMFGIFFL.

Belongs to the reprimo family.

The protein localises to the membrane. This is Reprimo-like protein (rprml) from Danio rerio (Zebrafish).